We begin with the raw amino-acid sequence, 256 residues long: Cell division protein ZapD (256 aa).

The protein belongs to the ZapD family. In terms of assembly, interacts with FtsZ.

It localises to the cytoplasm. In terms of biological role, cell division factor that enhances FtsZ-ring assembly. Directly interacts with FtsZ and promotes bundling of FtsZ protofilaments, with a reduction in FtsZ GTPase activity. This Aromatoleum aromaticum (strain DSM 19018 / LMG 30748 / EbN1) (Azoarcus sp. (strain EbN1)) protein is Cell division protein ZapD.